Reading from the N-terminus, the 378-residue chain is Homoserine O-acetyltransferase (378 aa).

In terms of domain architecture, AB hydrolase-1 spans 52 to 337; sequence NAILICHALT…YSQHGHDTFL (286 aa). The active-site Nucleophile is the serine 148. Substrate is bound at residue arginine 217. Active-site residues include aspartate 304 and histidine 333. Aspartate 334 is a substrate binding site.

Belongs to the AB hydrolase superfamily. MetX family. As to quaternary structure, homodimer.

The protein localises to the cytoplasm. It carries out the reaction L-homoserine + acetyl-CoA = O-acetyl-L-homoserine + CoA. It participates in amino-acid biosynthesis; L-methionine biosynthesis via de novo pathway; O-acetyl-L-homoserine from L-homoserine: step 1/1. Its function is as follows. Transfers an acetyl group from acetyl-CoA to L-homoserine, forming acetyl-L-homoserine. This Chloroherpeton thalassium (strain ATCC 35110 / GB-78) protein is Homoserine O-acetyltransferase.